A 90-amino-acid polypeptide reads, in one-letter code: Molybdopterin synthase sulfur carrier subunit (90 aa).

Glycine 90 is subject to 1-thioglycine; alternate. At glycine 90 the chain carries Glycyl adenylate; alternate.

This sequence belongs to the MoaD family. MOCS2A subfamily. Heterotetramer; composed of 2 small (Mocs2A) and 2 large (Mocs2B) subunits. Post-translationally, C-terminal thiocarboxylation occurs in 2 steps, it is first acyl-adenylated (-COAMP) via the hesA/moeB/thiF part of MOCS3, then thiocarboxylated (-COSH) via the rhodanese domain of MOCS3.

Its subcellular location is the cytoplasm. The protein operates within cofactor biosynthesis; molybdopterin biosynthesis. Functionally, acts as a sulfur carrier required for molybdopterin biosynthesis. Component of the molybdopterin synthase complex that catalyzes the conversion of precursor Z into molybdopterin by mediating the incorporation of 2 sulfur atoms into precursor Z to generate a dithiolene group. In the complex, serves as sulfur donor by being thiocarboxylated (-COSH) at its C-terminus by MOCS3. After interaction with Mocs2B, the sulfur is then transferred to precursor Z to form molybdopterin. Involved during biosynthesis of the molybdenum cofactor. In Drosophila melanogaster (Fruit fly), this protein is Molybdopterin synthase sulfur carrier subunit.